The chain runs to 658 residues: Sulfate transporter 3.1 (658 aa).

Over 1–85 the chain is Cytoplasmic; that stretch reads MGTEDYTFPQ…RYNLKFFKSD (85 aa). A helical membrane pass occupies residues 86–106; it reads LIAGITIASLAIPQGISYAKL. Topologically, residues 107–108 are extracellular; that stretch reads AN. Residues 109-129 form a helical membrane-spanning segment; the sequence is LPPILGLYSSFVPPLVYAVLG. The Cytoplasmic segment spans residues 130–133; sequence SSRD. The helical transmembrane segment at 134–154 threads the bilayer; sequence LAVGTVAVASLLTGAMLSKEV. Topologically, residues 155–163 are extracellular; that stretch reads DAEKDPKLY. Residues 164–184 traverse the membrane as a helical segment; the sequence is LHLAFTATFFAGVLEASLGIF. Position 185 (Arg-185) is a topological domain, cytoplasmic. The chain crosses the membrane as a helical span at residues 186 to 206; it reads LGFIVDFLSHATIVGFMGGAA. The Extracellular portion of the chain corresponds to 207–245; the sequence is TVVSLQQLKGIFGLKHFTDSTDVISVMRSVFSQTHEWRW. A helical transmembrane segment spans residues 246–266; that stretch reads ESGVLGCGFLFFLLSTRYFSI. Residues 267–271 lie on the Cytoplasmic side of the membrane; the sequence is KKPKF. Residues 272–292 form a helical membrane-spanning segment; that stretch reads FWVAAMAPLTSVILGSLLVYF. The Extracellular portion of the chain corresponds to 293–332; that stretch reads THAERHGVQVIGDLKKGLNPLSGSDLIFTSPYMSTAVKTG. The chain crosses the membrane as a helical span at residues 333-353; that stretch reads LITGIIALAEGVAVGRSFAMF. The Cytoplasmic portion of the chain corresponds to 354-363; the sequence is KNYNIDGNKE. The helical transmembrane segment at 364–384 threads the bilayer; the sequence is MIAFGMMNIVGSFTSCYLTTG. The Extracellular segment spans residues 385-398; sequence PFSRSAVNYNAGCK. A helical transmembrane segment spans residues 399–419; it reads TAMSNIVMAIAVMFTLLFLTP. Topologically, residues 420 to 425 are cytoplasmic; that stretch reads LFHYTP. Residues 426 to 446 traverse the membrane as a helical segment; the sequence is LVVLSAIIISAMLGLIDYQAA. At 447–464 the chain is on the extracellular side; it reads IHLWKVDKFDFLVCMSAY. Residues 465-485 form a helical membrane-spanning segment; that stretch reads VGVVFGSVEIGLVVAVAISIA. The Cytoplasmic portion of the chain corresponds to 486 to 658; it reads RLLLFVSRPK…ASKNEPWNNV (173 aa). The 125-residue stretch at 513–637 folds into the STAS domain; that stretch reads QYPSSRTVPG…LTVGEAVEAC (125 aa).

The protein belongs to the SLC26A/SulP transporter (TC 2.A.53) family. As to expression, expressed only in leaves.

Its subcellular location is the membrane. Functionally, h(+)/sulfate cotransporter that may play a role in the regulation of sulfate assimilation. This chain is Sulfate transporter 3.1 (SULTR3;1), found in Arabidopsis thaliana (Mouse-ear cress).